A 156-amino-acid chain; its full sequence is SsrA-binding protein (156 aa).

The span at 135-150 (KRDTIKDREWQRDRSR) shows a compositional bias: basic and acidic residues. The interval 135-156 (KRDTIKDREWQRDRSRIMKKNT) is disordered.

It belongs to the SmpB family.

It is found in the cytoplasm. Required for rescue of stalled ribosomes mediated by trans-translation. Binds to transfer-messenger RNA (tmRNA), required for stable association of tmRNA with ribosomes. tmRNA and SmpB together mimic tRNA shape, replacing the anticodon stem-loop with SmpB. tmRNA is encoded by the ssrA gene; the 2 termini fold to resemble tRNA(Ala) and it encodes a 'tag peptide', a short internal open reading frame. During trans-translation Ala-aminoacylated tmRNA acts like a tRNA, entering the A-site of stalled ribosomes, displacing the stalled mRNA. The ribosome then switches to translate the ORF on the tmRNA; the nascent peptide is terminated with the 'tag peptide' encoded by the tmRNA and targeted for degradation. The ribosome is freed to recommence translation, which seems to be the essential function of trans-translation. In Legionella pneumophila (strain Paris), this protein is SsrA-binding protein.